The chain runs to 614 residues: Dihydroxy-acid dehydratase (614 aa).

Position 81 (aspartate 81) interacts with Mg(2+). Cysteine 122 is a [2Fe-2S] cluster binding site. 2 residues coordinate Mg(2+): aspartate 123 and lysine 124. N6-carboxylysine is present on lysine 124. Cysteine 193 contacts [2Fe-2S] cluster. Residue glutamate 489 participates in Mg(2+) binding. Serine 515 (proton acceptor) is an active-site residue.

The protein belongs to the IlvD/Edd family. Homodimer. It depends on [2Fe-2S] cluster as a cofactor. Mg(2+) is required as a cofactor.

It carries out the reaction (2R)-2,3-dihydroxy-3-methylbutanoate = 3-methyl-2-oxobutanoate + H2O. It catalyses the reaction (2R,3R)-2,3-dihydroxy-3-methylpentanoate = (S)-3-methyl-2-oxopentanoate + H2O. The protein operates within amino-acid biosynthesis; L-isoleucine biosynthesis; L-isoleucine from 2-oxobutanoate: step 3/4. It participates in amino-acid biosynthesis; L-valine biosynthesis; L-valine from pyruvate: step 3/4. Functionally, functions in the biosynthesis of branched-chain amino acids. Catalyzes the dehydration of (2R,3R)-2,3-dihydroxy-3-methylpentanoate (2,3-dihydroxy-3-methylvalerate) into 2-oxo-3-methylpentanoate (2-oxo-3-methylvalerate) and of (2R)-2,3-dihydroxy-3-methylbutanoate (2,3-dihydroxyisovalerate) into 2-oxo-3-methylbutanoate (2-oxoisovalerate), the penultimate precursor to L-isoleucine and L-valine, respectively. The polypeptide is Dihydroxy-acid dehydratase (Cellvibrio japonicus (strain Ueda107) (Pseudomonas fluorescens subsp. cellulosa)).